The chain runs to 501 residues: MDKKKLFQYTLDGKFTDLELTLVDSNDTLTMHLHKVILSSSCPYFETMFSNSFSDSVSDKFRMEVINVYVMADIINSFYITDIERSQNLSEVDYQLLYTQSRNFLGLEHKIQNLEKIIFPENKFDKLLDTIDSCIGYNKETISILFYNMPMDYDLSKLPIKLLKKMSKISRYFILCIDSDRIELHNNHSCFSIGPVKLNYNCKLYKLLYSPIYHKYLMVNDTIHLIDTETDLSRISFDNNRYYCTNAVLSTDNRYVYSVYTNSTIRKFQTETTELIGVWYRDGMPIDTVNKNQGPITAFDDRPKKIMYSTPYDYIIVQYGTSLVCYKCLDMSIHWEMDNVHLPTLSQCEKYIVCLKGITGNQLCVIDIEKDSLKFGPILANCRYICNHDNTTVIIIHDYKISGSKIRVYDWVNNIFTYENESFNVSDITYIDHIENDNYIIVSHDIIDDSYISINKWNFKEDTTKLVTACYDNYSHKFYTITNFKAALQKRIKEYIDTNSN.

The BTB domain maps to 16 to 87 (TDLELTLVDS…FYITDIERSQ (72 aa)).

It belongs to the mimivirus BTB/WD family.

The chain is Putative BTB/POZ domain-containing protein L107 from Acanthamoeba polyphaga mimivirus (APMV).